The chain runs to 914 residues: UPF0182 protein Syncc9605_1323 (914 aa).

Transmembrane regions (helical) follow at residues 4-24 (LLLL…WLWF), 37-57 (WLLQ…ARAW), 81-101 (IALL…LDLL), 123-143 (RIGS…MTWL), 152-172 (IVAA…SLAL), 195-215 (FAGL…TLVF), 240-260 (MRLI…LVWL), 285-305 (LPLR…LLLP), and 312-332 (QFLA…TPLT).

Belongs to the UPF0182 family.

Its subcellular location is the cell membrane. In Synechococcus sp. (strain CC9605), this protein is UPF0182 protein Syncc9605_1323.